Reading from the N-terminus, the 482-residue chain is Caspase-8 (482 aa).

A propeptide spanning residues 1–218 (MDFHSCLYDI…DMWDSPGEQE (218 aa)) is cleaved from the precursor. DED domains follow at residues 2 to 80 (DFHS…RVLK) and 100 to 177 (AYRV…RIDD). Phosphoserine occurs at positions 188 and 213. The active site involves H319. Y336 carries the phosphotyrosine modification. Residue C362 is part of the active site. Residues 379-388 (LEQEHVLEED) constitute a propeptide that is removed on maturation. S390 carries the phosphoserine; by CDK1 modification.

This sequence belongs to the peptidase C14A family. As to quaternary structure, heterotetramer that consists of two anti-parallel arranged heterodimers, each one formed by a 18 kDa (p18) and a 10 kDa (p10) subunit. Component of the death-induced signaling complex (DISC) composed of cell surface receptor FAS/CD95 or TNFRSF1A, adapter protein FADD and the CASP8 protease; recruitment of CASP8 to the complex is required for processing of CASP8 into the p18 and p10 subunits. Component of the AIM2 PANoptosome complex, a multiprotein complex that drives inflammatory cell death (PANoptosis). Interacts with CFLAR and PEA15. Interacts with RFFL and RNF34; negatively regulate CASP8 through proteasomal degradation. Interacts with TNFAIP8L2. Interacts with CASP8AP2. Interacts with NOL3; decreases CASP8 activity in a mitochondria localization- and phosphorylation-dependent manner and this interaction is dissociated by calcium. Interacts with UBR2. Interacts with RIPK1. Interacts with stimulated TNFRSF10B; this interaction is followed by CASP8 proteolytic cleavage and activation. In terms of processing, generation of the subunits requires association with the death-inducing signaling complex (DISC), whereas additional processing is likely due to the autocatalytic activity of the activated protease. GZMB and CASP10 can be involved in these processing events. Post-translationally, phosphorylation on Ser-389 during mitosis by CDK1 inhibits activation by proteolysis and prevents apoptosis. This phosphorylation occurs in cancer cell lines, as well as in primary breast tissues and lymphocytes.

The protein localises to the cytoplasm. It localises to the nucleus. The catalysed reaction is Strict requirement for Asp at position P1 and has a preferred cleavage sequence of (Leu/Asp/Val)-Glu-Thr-Asp-|-(Gly/Ser/Ala).. CASP8 activity is restricted by RIPK1. Thiol protease that plays a key role in programmed cell death by acting as a molecular switch for apoptosis, necroptosis and pyroptosis, and is required to prevent tissue damage during embryonic development and adulthood. Initiator protease that induces extrinsic apoptosis by mediating cleavage and activation of effector caspases responsible for FAS/CD95-mediated and TNFRSF1A-induced cell death. Cleaves and activates effector caspases CASP3, CASP4, CASP6, CASP7, CASP9 and CASP10. Binding to the adapter molecule FADD recruits it to either receptor FAS/CD95 or TNFRSF1A. The resulting aggregate called the death-inducing signaling complex (DISC) performs CASP8 proteolytic activation. The active dimeric enzyme is then liberated from the DISC and free to activate downstream apoptotic proteases. Proteolytic fragments of the N-terminal propeptide (termed CAP3, CAP5 and CAP6) are likely retained in the DISC. In addition to extrinsic apoptosis, also acts as a negative regulator of necroptosis: acts by cleaving RIPK1 at 'Asp-325', which is crucial to inhibit RIPK1 kinase activity, limiting TNF-induced apoptosis, necroptosis and inflammatory response. Also able to initiate pyroptosis by mediating cleavage and activation of gasdermin-C and -D (GSDMC and GSDMD, respectively): gasdermin cleavage promotes release of the N-terminal moiety that binds to membranes and forms pores, triggering pyroptosis. Initiates pyroptosis following inactivation of MAP3K7/TAK1. Also acts as a regulator of innate immunity by mediating cleavage and inactivation of N4BP1 downstream of TLR3 or TLR4, thereby promoting cytokine production. May participate in the Granzyme B (GZMB) cell death pathways. Cleaves PARP1 and PARP2. The polypeptide is Caspase-8 (Rattus norvegicus (Rat)).